Consider the following 381-residue polypeptide: Probable serine/threonine-protein kinase PBL21 (381 aa).

C3 is lipidated: S-palmitoyl cysteine. The 277-residue stretch at 78–354 folds into the Protein kinase domain; it reads FREVNLLGEG…GDIVVALEYL (277 aa). Residues 84–92 and K106 contribute to the ATP site; that span reads LGEGGFGRV. D204 functions as the Proton acceptor in the catalytic mechanism. A disordered region spans residues 362-381; that stretch reads EARNVSSPSPEISRTPRRDL.

This sequence belongs to the protein kinase superfamily. Ser/Thr protein kinase family. Post-translationally, palmitoylation at Cys-3 and Cys-7 are required for plasma membrane location.

The protein resides in the cell membrane. The catalysed reaction is L-seryl-[protein] + ATP = O-phospho-L-seryl-[protein] + ADP + H(+). It carries out the reaction L-threonyl-[protein] + ATP = O-phospho-L-threonyl-[protein] + ADP + H(+). Functionally, may be involved in plant defense signaling. The polypeptide is Probable serine/threonine-protein kinase PBL21 (Arabidopsis thaliana (Mouse-ear cress)).